The chain runs to 942 residues: Serine/threonine-protein kinase ATG1 (942 aa).

The 302-residue stretch at Y11–V312 folds into the Protein kinase domain. Residues I17–V25 and K41 each bind ATP. D159 serves as the catalytic Proton acceptor. Polar residues predominate over residues N435–D452. Disordered stretches follow at residues N435–S454, Q505–A529, and N817–N836. The segment covering R515–A529 has biased composition (low complexity). A compositionally biased stretch (polar residues) spans K819 to D834.

This sequence belongs to the protein kinase superfamily. Ser/Thr protein kinase family. APG1/unc-51/ULK1 subfamily. Homodimer. Forms a ternary complex with ATG13 and ATG17.

The protein localises to the cytoplasm. Its subcellular location is the preautophagosomal structure membrane. It carries out the reaction L-seryl-[protein] + ATP = O-phospho-L-seryl-[protein] + ADP + H(+). The enzyme catalyses L-threonyl-[protein] + ATP = O-phospho-L-threonyl-[protein] + ADP + H(+). Serine/threonine protein kinase involved in the cytoplasm to vacuole transport (Cvt) and found to be essential in autophagy, where it is required for the formation of autophagosomes. Involved in the clearance of protein aggregates which cannot be efficiently cleared by the proteasome. Required for selective autophagic degradation of the nucleus (nucleophagy) as well as for mitophagy which contributes to regulate mitochondrial quantity and quality by eliminating the mitochondria to a basal level to fulfill cellular energy requirements and preventing excess ROS production. Also involved in endoplasmic reticulum-specific autophagic process, in selective removal of ER-associated degradation (ERAD) substrates. Plays a key role in ATG9 and ATG23 cycling through the pre-autophagosomal structure and is necessary to promote ATG18 binding to ATG9 through phosphorylation of ATG9. Catalyzes phosphorylation of ATG4, decreasing the interaction between ATG4 and ATG8 and impairing deconjugation of PE-conjugated forms of ATG8. Contributes to virulence by conferring resistance to unstable nutrient environments and immune defense of hosts. The chain is Serine/threonine-protein kinase ATG1 from Candida glabrata (strain ATCC 2001 / BCRC 20586 / JCM 3761 / NBRC 0622 / NRRL Y-65 / CBS 138) (Yeast).